The primary structure comprises 299 residues: Circadian clock oscillator protein KaiA (299 aa).

Residues 9–148 are psR domain, binds oxidized quinones; the sequence is SRPQIFICTL…LQLSKACRLP (140 aa). A KaiA N-terminal domain is found at 9-179; the sequence is SRPQIFICTL…RLSQKLKERL (171 aa). The interval 180–188 is flexible linker; sequence GYLGVYYKR. Positions 189 to 297 constitute a KaiA C-terminal domain; it reads NPQQFFHKLT…CEMYRRSIPK (109 aa).

Homodimer. The KaiABC complex composition changes during the circadian cycle to control KaiC phosphorylation. Complexes KaiC(6), KaiA(2-4):KaiC(6), KaiB(6):KaiC(6) and KaiC(6):KaiB(6):KaiA(12) are among the most important forms, many form cooperatively. KaiA and CikA bind to the same region of the KaiB(fs) form and therefore compete.

Its function is as follows. Key component of the KaiABC oscillator complex, which constitutes the main circadian regulator in cyanobacteria. Complex composition changes during the circadian cycle to control KaiC phosphorylation. KaiA stimulates KaiC autophosphorylation, while KaiB sequesters KaiA, leading to KaiC autodephosphorylation. KaiA binding to the KaiC CII domain during the subjective day yields KaiA(2-4):KaiC(6) complexes which stimulate KaiC autophosphorylation. Phospho-Ser-431 KaiC accumulation triggers binding of KaiB during the subjective night to form the KaiB(6):KaiC(6) complex, leading to changes in the output regulators CikA and SasA. KaiB(6):KaiC(6) formation exposes a site for KaiA binding on KaiB that sequesters KaiA from KaiC's CII domain, making the KaiC(6):KaiB(6):KaiA(12) complex resulting in KaiC autodephosphorylation. Complete dephosphorylation of KaiC leads to dissociation of KaiA(2):KaiB(1), completing 1 cycle of the Kai oscillator. In terms of biological role, binds oxidized quinones via the N-terminal PsR domain, allowing it to sense redox changes and possibly mediate clock input. The polypeptide is Circadian clock oscillator protein KaiA (Acaryochloris marina (strain MBIC 11017)).